We begin with the raw amino-acid sequence, 956 residues long: Outer capsid protein VP2 (956 aa).

The protein belongs to the orbivirus VP2 family.

Its subcellular location is the virion. The VP2 protein is one of the two proteins (with VP5) which constitute the virus particle outer capsid. It is the major target of the host immunogenic response. Responsible for viral attachment to target host cell, probably by binding to sialic acid. This attachment induces virion internalization predominantly through clathrin-dependent endocytosis. In Bluetongue virus 10 (isolate USA) (BTV 10), this protein is Outer capsid protein VP2 (Segment-2).